A 512-amino-acid polypeptide reads, in one-letter code: Kelch repeat protein C2 (512 aa).

The 66-residue stretch at 2–67 (ESVIFSINGE…MRWKKINITI (66 aa)) folds into the BTB domain. Residues 102-176 (CIRMFNFSKR…LLKWIHKNPN (75 aa)) form the BACK domain. 6 Kelch repeats span residues 216–261 (IKHN…LHNC), 262–307 (LYII…VNNG), 309–354 (LYVI…FVND), 356–403 (IYVM…EYDG), 405–449 (IYVI…SCGD), and 452–498 (LIIA…THKS).

The protein belongs to the poxviruses Kelch family.

This chain is Kelch repeat protein C2, found in Rabbitpox virus (strain Utrecht) (RPV).